The sequence spans 775 residues: Phosphoribosylformylglycinamidine synthase subunit PurL (775 aa).

The active site involves H81. Positions 84 and 123 each coordinate ATP. E125 is a binding site for Mg(2+). Substrate contacts are provided by residues S126 to H129 and R148. H127 functions as the Proton acceptor in the catalytic mechanism. D149 provides a ligand contact to Mg(2+). Q272 lines the substrate pocket. Residue D300 participates in Mg(2+) binding. Residue E344–Q346 participates in substrate binding. ATP-binding residues include D525 and G562. Mg(2+) is bound at residue N563. S565 contributes to the substrate binding site.

It belongs to the FGAMS family. As to quaternary structure, monomer. Part of the FGAM synthase complex composed of 1 PurL, 1 PurQ and 2 PurS subunits.

The protein localises to the cytoplasm. It catalyses the reaction N(2)-formyl-N(1)-(5-phospho-beta-D-ribosyl)glycinamide + L-glutamine + ATP + H2O = 2-formamido-N(1)-(5-O-phospho-beta-D-ribosyl)acetamidine + L-glutamate + ADP + phosphate + H(+). It functions in the pathway purine metabolism; IMP biosynthesis via de novo pathway; 5-amino-1-(5-phospho-D-ribosyl)imidazole from N(2)-formyl-N(1)-(5-phospho-D-ribosyl)glycinamide: step 1/2. Functionally, part of the phosphoribosylformylglycinamidine synthase complex involved in the purines biosynthetic pathway. Catalyzes the ATP-dependent conversion of formylglycinamide ribonucleotide (FGAR) and glutamine to yield formylglycinamidine ribonucleotide (FGAM) and glutamate. The FGAM synthase complex is composed of three subunits. PurQ produces an ammonia molecule by converting glutamine to glutamate. PurL transfers the ammonia molecule to FGAR to form FGAM in an ATP-dependent manner. PurS interacts with PurQ and PurL and is thought to assist in the transfer of the ammonia molecule from PurQ to PurL. This chain is Phosphoribosylformylglycinamidine synthase subunit PurL, found in Agrobacterium fabrum (strain C58 / ATCC 33970) (Agrobacterium tumefaciens (strain C58)).